The sequence spans 358 residues: sn-glycerol-3-phosphate import ATP-binding protein UgpC (358 aa).

The ABC transporter domain maps to 4–235; the sequence is VELKQVRKTY…PATLFVASFI (232 aa). Residue 37-44 participates in ATP binding; the sequence is GPSGCGKS.

The protein belongs to the ABC transporter superfamily. sn-glycerol-3-phosphate importer (TC 3.A.1.1.3) family. The complex is composed of two ATP-binding proteins (UgpC), two transmembrane proteins (UgpA and UgpE) and a solute-binding protein (UgpB).

The protein localises to the cell inner membrane. The enzyme catalyses sn-glycerol 3-phosphate(out) + ATP + H2O = sn-glycerol 3-phosphate(in) + ADP + phosphate + H(+). Functionally, part of the ABC transporter complex UgpBAEC involved in sn-glycerol-3-phosphate (G3P) import. Responsible for energy coupling to the transport system. The sequence is that of sn-glycerol-3-phosphate import ATP-binding protein UgpC from Roseobacter denitrificans (strain ATCC 33942 / OCh 114) (Erythrobacter sp. (strain OCh 114)).